Here is a 129-residue protein sequence, read N- to C-terminus: Glycine cleavage system H protein (129 aa).

Residues 24–106 (SYTVGITEHA…YGEGWFFRVM (83 aa)) form the Lipoyl-binding domain. The residue at position 65 (lysine 65) is an N6-lipoyllysine.

This sequence belongs to the GcvH family. In terms of assembly, the glycine cleavage system is composed of four proteins: P, T, L and H. (R)-lipoate is required as a cofactor.

In terms of biological role, the glycine cleavage system catalyzes the degradation of glycine. The H protein shuttles the methylamine group of glycine from the P protein to the T protein. The chain is Glycine cleavage system H protein from Shewanella putrefaciens (strain CN-32 / ATCC BAA-453).